A 309-amino-acid polypeptide reads, in one-letter code: Homoserine kinase (309 aa).

An ATP-binding site is contributed by 91 to 101; that stretch reads PIGSGLGSSAC.

The protein belongs to the GHMP kinase family. Homoserine kinase subfamily.

It is found in the cytoplasm. The enzyme catalyses L-homoserine + ATP = O-phospho-L-homoserine + ADP + H(+). The protein operates within amino-acid biosynthesis; L-threonine biosynthesis; L-threonine from L-aspartate: step 4/5. In terms of biological role, catalyzes the ATP-dependent phosphorylation of L-homoserine to L-homoserine phosphate. The chain is Homoserine kinase from Erwinia tasmaniensis (strain DSM 17950 / CFBP 7177 / CIP 109463 / NCPPB 4357 / Et1/99).